Here is a 120-residue protein sequence, read N- to C-terminus: UPF0102 protein TWT_455 (120 aa).

It belongs to the UPF0102 family.

This chain is UPF0102 protein TWT_455, found in Tropheryma whipplei (strain Twist) (Whipple's bacillus).